Reading from the N-terminus, the 644-residue chain is MKKETIFSEVETANSKQLAVLKANFPQCFDKNGAFIQEKLLEIIRASEVELSKESYSLNWLGKSYARLLANLPPKTLLAEDKTHNQQEENKNSQHLLIKGDNLEVLKHMVNAYAEKVKMIYIDPPYNTGKDGFVYNDDRKFTPEQLSELAGIDLDEAKRILEFTTKGSSSHSAWLTFIYPRLYIARELMREDGTIFISIDHNEFSQLKLVCDEIFGEQNHVGDLVWKNATDNNPSNIAVEHEYIIVYTKNKEQLISEWKSNISDVKNLLVNIGEEFASKYTGNELQEKYTQWFREHRSELWPLDRYKYIDKDGIYTGSQSVHNPGKEGYRYDIIHPKTKKPCKQPLMGYRFPLDTMDRLLSEEKIIFGDDENKIIELKVYAKDYKQKLSSVIHLDGRVATNELKELFPEMTQPFTNAKTIKLVEDLISFACDGEGIVLDFFAGSGTTAHTVFNLNNKNKTSYQFITVQLDEPTKDKSDAMKHGYNTIFDLTKERLIRASKKNRDQGFKVYQLMPDFRAKDESELTLSNHTFFDDVVLTPEQYDTLLTTWCLYDGSLLTTPIEDVDLGGYKAHLCDGRLYLIAPNFTSEALKALLQKVDSDKDFAPNKVVFYGSNFESAKQMELNEALKSYANKKSIELDLVVRN.

Residues 123–126 are binding of S-adenosyl methionine; that stretch reads DPPY.

It belongs to the N(4)/N(6)-methyltransferase family. In terms of assembly, forms a homodimer capable of methylating the target sequence in the absence of Res. A heterotetramer with stoichiometry Res(2)Mod(2). A heterotrimer with stoichiometry Res(1)Mod(2).

It carries out the reaction a 2'-deoxyadenosine in DNA + S-adenosyl-L-methionine = an N(6)-methyl-2'-deoxyadenosine in DNA + S-adenosyl-L-homocysteine + H(+). Its function is as follows. A beta subtype methylase that binds the system-specific DNA recognition site 5'-CAGCAG-3' and methylates A-5 (of only 1 strand as the other does not have an A residue). DNA restriction requires both the Res and Mod subunits. The A-5 nucleotide flips into the catalytic pocket of one Mod subunit for modification, while the other Mod subunit makes most of the DNA sequence-specific contacts. The protein is Type III restriction-modification enzyme EcoP15I Mod subunit of Escherichia coli.